Reading from the N-terminus, the 225-residue chain is UPF0758 protein SZO_09140 (225 aa).

Residues 102 to 224 (PVLSSAQVAE…YYSFREKSDL (123 aa)) enclose the MPN domain. Zn(2+)-binding residues include H173, H175, and D186. A JAMM motif motif is present at residues 173–186 (HNHPSGLTKPSAND).

It belongs to the UPF0758 family.

This Streptococcus equi subsp. zooepidemicus (strain H70) protein is UPF0758 protein SZO_09140.